A 389-amino-acid chain; its full sequence is Epidermis-specific secreted glycoprotein EP1 (389 aa).

Residues 1-24 (MARFFPLTLTILLFFIQRIDFCHT) form the signal peptide. Asn-29 carries an N-linked (GlcNAc...) (complex) asparagine glycan. The Bulb-type lectin domain occupies 88–193 (MRWVWEANRG…ASPGENVNGP (106 aa)). 3 N-linked (GlcNAc...) asparagine glycosylation sites follow: Asn-103, Asn-230, and Asn-235. An N-linked (GlcNAc...) (high mannose) asparagine glycan is attached at Asn-274.

In 14-day old seedlings, expressed in the epidermis and apical dome of the shoot and in the hypocotyl, cotyledon and epidermis of the root. In developing seeds, expressed in both the inner and outer epidermis of the integument.

The protein resides in the secreted. May be involved in the limitation of water flow through the outer epidermal cell wall, either by direct modification of wall structure or as a signal instructing the protoplast to restrict water transport across the cell wall. The chain is Epidermis-specific secreted glycoprotein EP1 (EP1) from Daucus carota (Wild carrot).